The sequence spans 1002 residues: Protein SMAX1-LIKE 7 (1002 aa).

Residues 8 to 185 form the Clp R domain; sequence ARQCLTEETA…DVLHPPVTSQ (178 aa). Repeat regions lie at residues 12–86 and 103–185; these read LTEE…LDRL and VSNS…VTSQ. The short motif at 854 to 858 is the EAR element; that stretch reads LDLNL.

It belongs to the ClpA/ClpB family. Interacts with TPL/TPR in an EAR-motif dependent manner. Interacts with TPL, TPR1, TPR2 and TPR4. Interacts with MAX2 and TPR2. Interacts with D14. The interaction with D14 occurs in the presence of (2'R) stereoisomers of strigolactones, but not (2'S) stereoisomers. Post-translationally, ubiquitinated upon strigolactone treatment. Strigolactone, but not karrikin, triggers rapid SCF(MAX2)-dependent degradation. As to expression, expressed in axillary branches and roots. Detected in seedlings and leaves. Expressed in the primary rosette buds and expanding leaves of adult rosettes, the vasculature of the hypocotyls, cotyledons, and mature roots, and in the midvein and petioles of young leaves.

It is found in the nucleus. In terms of biological role, probable component of a transcriptional corepressor complex involved in branching control. Regulates cotyledon expansion and lateral root growth, but not germination or hypocotyl elongation. Promotes auxin transport and PIN1 accumulation in the stem and represses BRC1/TCP18 expression in axillary buds. The polypeptide is Protein SMAX1-LIKE 7 (Arabidopsis thaliana (Mouse-ear cress)).